We begin with the raw amino-acid sequence, 245 residues long: Probable phosphatase Ent638_1550 (245 aa).

The Zn(2+) site is built by His-7, His-9, His-15, His-40, Glu-73, His-101, His-131, Asp-192, and His-194.

It belongs to the PHP family. In terms of assembly, homotrimer. Zn(2+) serves as cofactor.

This is Probable phosphatase Ent638_1550 from Enterobacter sp. (strain 638).